The chain runs to 387 residues: Postreplication repair E3 ubiquitin-protein ligase rad18 (387 aa).

Residues 29–67 form an RING-type zinc finger; that stretch reads CLICHEYFRAPLITSCSHTFCSFCIRDYLREHPMCPACR. A disordered region spans residues 119–153; it reads DSASGDEEWEDDLASNSSPASIAKKTSRDSKKRKR. The segment covering 122–131 has biased composition (acidic residues); sequence SGDEEWEDDL. The UBZ4-type zinc finger occupies 156-183; the sequence is LVHCPACSNLVPHNQINQHLDSCLNSPS. Residues cysteine 159, cysteine 162, histidine 174, and cysteine 178 each contribute to the Zn(2+) site. A disordered region spans residues 174–206; the sequence is HLDSCLNSPSSPSSSSSPYKNKDNSKSNSLLSF. A compositionally biased stretch (low complexity) spans 177–192; it reads SCLNSPSSPSSSSSPY. One can recognise an SAP domain in the interval 240–274; it reads YALLSESKIRSKLSEMGLPTDGHKQLLQRRHAKWV. Positions 335–387 are disordered; it reads KQSTTNKNDSLRNTAVESSTEPSTSNGFPATSVSPPLTIDLTNSQTGSDGPQS.

It belongs to the RAD18 family. In terms of assembly, interacts with E2 ubc2, forming a complex with ubiquitin ligase activity.

Its subcellular location is the nucleus. It catalyses the reaction S-ubiquitinyl-[E2 ubiquitin-conjugating enzyme]-L-cysteine + [acceptor protein]-L-lysine = [E2 ubiquitin-conjugating enzyme]-L-cysteine + N(6)-ubiquitinyl-[acceptor protein]-L-lysine.. Its pathway is protein modification; protein ubiquitination. Functionally, E3 RING-finger protein, member of the UBC2/RAD6 epistasis group. Associates to the E2 ubiquitin conjugating enzyme ubc2/rad6 to form the ubc2-rad18 ubiquitin ligase complex involved in postreplicative repair (PRR) of damaged DNA. The protein is Postreplication repair E3 ubiquitin-protein ligase rad18 (rhp18) of Schizosaccharomyces pombe (strain 972 / ATCC 24843) (Fission yeast).